The primary structure comprises 97 residues: Large ribosomal subunit protein uL23 (97 aa).

Belongs to the universal ribosomal protein uL23 family. Part of the 50S ribosomal subunit. Contacts protein L29, and trigger factor when it is bound to the ribosome.

In terms of biological role, one of the early assembly proteins it binds 23S rRNA. One of the proteins that surrounds the polypeptide exit tunnel on the outside of the ribosome. Forms the main docking site for trigger factor binding to the ribosome. This Clostridium botulinum (strain ATCC 19397 / Type A) protein is Large ribosomal subunit protein uL23.